The chain runs to 220 residues: 6-phosphogluconolactonase (220 aa).

It belongs to the glucosamine/galactosamine-6-phosphate isomerase family. 6-phosphogluconolactonase subfamily.

It catalyses the reaction 6-phospho-D-glucono-1,5-lactone + H2O = 6-phospho-D-gluconate + H(+). Its pathway is carbohydrate degradation; pentose phosphate pathway; D-ribulose 5-phosphate from D-glucose 6-phosphate (oxidative stage): step 2/3. Hydrolysis of 6-phosphogluconolactone to 6-phosphogluconate. In Thermotoga maritima (strain ATCC 43589 / DSM 3109 / JCM 10099 / NBRC 100826 / MSB8), this protein is 6-phosphogluconolactonase (pgl).